Consider the following 619-residue polypeptide: 4-hydroxyphenylalkanoate adenylyltransferase (619 aa).

Belongs to the ATP-dependent AMP-binding enzyme family.

The catalysed reaction is 17-(4-hydroxyphenyl)heptadecanoate + holo-[(phenol)carboxyphthiodiolenone synthase] + ATP = 17-(4-hydroxyphenyl)heptadecanoyl-[(phenol)carboxyphthiodiolenone synthase] + AMP + diphosphate. It carries out the reaction 19-(4-hydroxyphenyl)nonadecanoate + holo-[(phenol)carboxyphthiodiolenone synthase] + ATP = 19-(4-hydroxyphenyl)nonadecanoyl-[(phenol)carboxyphthiodiolenone synthase] + AMP + diphosphate. It participates in lipid metabolism; fatty acid biosynthesis. Its function is as follows. Catalyzes the activation of long-chain fatty acids as acyl-adenylates (acyl-AMP), which are then transferred to the multifunctional polyketide synthase PpsA for further chain extension. Involved in the biosynthesis of phenolphthiocerol, which is an important intermediate in the biosynthesis of phenolic glycolipid (PGL), also called mycosid B. This Mycobacterium bovis (strain ATCC BAA-935 / AF2122/97) protein is 4-hydroxyphenylalkanoate adenylyltransferase (fadD29).